The chain runs to 815 residues: RNA-binding protein 5 (815 aa).

The segment at 1–93 (MGSDKRVSRT…EHDYRHDISD (93 aa)) is disordered. 5 positions are modified to phosphoserine: Ser18, Ser59, Ser69, Ser72, and Ser78. The RRM 1 domain occupies 98–178 (KTIMLRGLPI…KHIAMHYSNP (81 aa)). The RanBP2-type zinc-finger motif lies at 181–210 (KFEDWLCNKCCLNNFRKRLKCFRCGADKFD). The RRM 2 domain maps to 231–315 (DTIILRNIAP…KTIGVDFAKS (85 aa)). The tract at residues 321-809 (VLSDGNRVSA…KDAVRKAMFA (489 aa)) is required for interaction with U2AF2. The span at 411 to 422 (QSPQLYNQTSNP) shows a compositional bias: polar residues. Disordered regions lie at residues 411–468 (QSPQ…DESS) and 507–540 (PAAE…AQQI). The segment covering 426 to 446 (PTEEAQPSTSTSTQAPAASPT) has biased composition (low complexity). A Phosphoserine modification is found at Ser444. The interval 452–535 (TKYAVPDTST…KEKKEKPKSK (84 aa)) is sufficient for interaction with ACIN1, PRPF8, SFRS3, SNRPB, SNRPN, SNRNP70 and SNRNP200. Phosphoserine is present on residues Ser621 and Ser624. A C2H2-type; atypical zinc finger spans residues 647 to 677 (MACLLCRRQFPNKDALVRHQQLSDLHKQNMD). The G-patch domain maps to 743-789 (HSNIGNKMLQAMGWREGSGLGRKCQGITAPIEAQVRLKGAGLGAKGS).

Belongs to the RBM5/RBM10 family. In terms of assembly, component of the spliceosome A complex (also known as the prespliceosome). Appears to dissociate from the spliceosome upon formation of the spliceosome B complex (also known as the precatalytic spliceosome), in which the heterotrimeric U4/U6.U5 snRNPs are bound. Interacts with U2AF2; this interaction is direct. Also interacts with ACIN1, PRPF8, SFRS3, SNRPB, SNRPN, SNRNP70 and SNRNP200; these interactions may be indirect. Isoform 5 is widely expressed in normal tissues and is expressed at increased levels in T-leukemic cell lines.

The protein localises to the nucleus. Component of the spliceosome A complex. Binds to ssRNA containing the consensus sequence 5'-AGGUAA-3'. Regulates alternative splicing of a number of mRNAs. May modulate splice site pairing after recruitment of the U1 and U2 snRNPs to the 5' and 3' splice sites of the intron. May both positively and negatively regulate apoptosis by regulating the alternative splicing of several genes involved in this process, including FAS and CASP2/caspase-2. In the case of FAS, promotes exclusion of exon 6 thereby producing a soluble form of FAS that inhibits apoptosis. In the case of CASP2/caspase-2, promotes exclusion of exon 9 thereby producing a catalytically active form of CASP2/Caspase-2 that induces apoptosis. This Homo sapiens (Human) protein is RNA-binding protein 5 (RBM5).